The sequence spans 208 residues: Protein-L-isoaspartate O-methyltransferase (208 aa).

Residue S59 is part of the active site.

Belongs to the methyltransferase superfamily. L-isoaspartyl/D-aspartyl protein methyltransferase family.

Its subcellular location is the cytoplasm. It carries out the reaction [protein]-L-isoaspartate + S-adenosyl-L-methionine = [protein]-L-isoaspartate alpha-methyl ester + S-adenosyl-L-homocysteine. Functionally, catalyzes the methyl esterification of L-isoaspartyl residues in peptides and proteins that result from spontaneous decomposition of normal L-aspartyl and L-asparaginyl residues. It plays a role in the repair and/or degradation of damaged proteins. The sequence is that of Protein-L-isoaspartate O-methyltransferase from Escherichia fergusonii (strain ATCC 35469 / DSM 13698 / CCUG 18766 / IAM 14443 / JCM 21226 / LMG 7866 / NBRC 102419 / NCTC 12128 / CDC 0568-73).